The primary structure comprises 60 residues: Short neurotoxin 1 (60 aa).

Cystine bridges form between C3–C22, C17–C39, C41–C52, and C53–C58.

Belongs to the three-finger toxin family. Short-chain subfamily. Type I alpha-neurotoxin sub-subfamily. Expressed by the venom gland.

Its subcellular location is the secreted. Its function is as follows. Binds to muscle nicotinic acetylcholine receptor (nAChR) and inhibit acetylcholine from binding to the receptor, thereby impairing neuromuscular transmission. This is Short neurotoxin 1 from Hydrophis schistosus (Beaked sea snake).